Consider the following 149-residue polypeptide: Large ribosomal subunit protein uL13 (149 aa).

Belongs to the universal ribosomal protein uL13 family. In terms of assembly, part of the 50S ribosomal subunit.

This protein is one of the early assembly proteins of the 50S ribosomal subunit, although it is not seen to bind rRNA by itself. It is important during the early stages of 50S assembly. The polypeptide is Large ribosomal subunit protein uL13 (Thermotoga maritima (strain ATCC 43589 / DSM 3109 / JCM 10099 / NBRC 100826 / MSB8)).